The sequence spans 148 residues: Large ribosomal subunit protein bL9 (148 aa).

Belongs to the bacterial ribosomal protein bL9 family.

In terms of biological role, binds to the 23S rRNA. This Acinetobacter baumannii (strain AB307-0294) protein is Large ribosomal subunit protein bL9.